The primary structure comprises 389 residues: Inactive serine/threonine-protein kinase ZRK12 (389 aa).

The Protein kinase domain occupies 41 to 342 (SADEIRKATN…ETQFDSHQDI (302 aa)). Residues 47 to 55 (KATNNFGVS) and Lys-84 each bind ATP. The residue at position 129 (Tyr-129) is a Phosphotyrosine. Thr-214 carries the post-translational modification Phosphothreonine. Residue Tyr-222 is modified to Phosphotyrosine.

Belongs to the protein kinase superfamily. Ser/Thr protein kinase family.

Functionally, together with RPP13L4/ZAR1, involved in the regulation of the ambient temperature-sensitive intersection of growth and immune response in the absence of pathogens. This is Inactive serine/threonine-protein kinase ZRK12 from Arabidopsis thaliana (Mouse-ear cress).